The primary structure comprises 405 residues: NAC transcription factor NAM-A1 (405 aa).

The span at 1–10 shows a compositional bias: low complexity; sequence MGSSDSSSGS. The interval 1 to 38 is disordered; the sequence is MGSSDSSSGSAQKAARHQHEPPPPRQRGSAPELPPGFR. The NAC domain occupies 33-204; the sequence is LPPGFRFHPT…DWVLCRIYKK (172 aa). The DNA-binding element occupies 137–210; sequence LGVKKALVFY…IYKKINKAAA (74 aa).

As to expression, expressed in flag leaves, green spikes and peduncles.

Its subcellular location is the nucleus. Transcription factor of the NAC family associated with the grain protein content (GPC). Accelerates senescence and increases nutrient remobilization from leaves to developing grains. The tetraploid cultivated wheat (T.durum) contains one additional gene coding for a functional protein (NAM-B2) and one extra pseudogene (NAM-B1). The chain is NAC transcription factor NAM-A1 (NAM-A1) from Triticum turgidum subsp. durum (Durum wheat).